Reading from the N-terminus, the 291-residue chain is Probable aquaporin PIP2-4 (291 aa).

The residue at position 1 (Met-1) is an N-acetylmethionine. The segment at 1 to 22 (MAKDLDVNESGPPAARDYKDPP) is disordered. At Ala-2 the chain carries N-acetylalanine; in Probable aquaporin PIP2-4, N-terminally processed. The Cytoplasmic segment spans residues 2 to 39 (AKDLDVNESGPPAARDYKDPPPAPFFDMEELRKWPLYR). Residue Lys-3 is modified to N6,N6-dimethyllysine. Residues 40–60 (AVIAEFVATLLFLYVSILTVI) form a helical membrane-spanning segment. Residues 61–74 (GYKAQTDATAGGVD) are Extracellular-facing. Residues 75 to 95 (CGGVGILGIAWAFGGMIFVLV) traverse the membrane as a helical segment. The Cytoplasmic portion of the chain corresponds to 96–125 (YCTAGISGGHINPAVTVGLFLARKVSLVRT). An NPA 1 motif is present at residues 107–109 (NPA). The chain crosses the membrane as a helical span at residues 126–146 (VLYIVAQCLGAICGCGFVKAF). Residues 147–167 (QSSYYTRYGGGANELADGYNK) are Extracellular-facing. Residues 168–188 (GTGLGAEIIGTFVLVYTVFSA) traverse the membrane as a helical segment. Topologically, residues 189 to 201 (TDPKRNARDSHVP) are cytoplasmic. The helical transmembrane segment at 202-222 (VLAPLPIGFAVFMVHLATIPI) threads the bilayer. Residues 223 to 249 (TGTGINPARSFGAAVIYNNEKAWDDQW) lie on the Extracellular side of the membrane. An NPA 2 motif is present at residues 228–230 (NPA). A helical transmembrane segment spans residues 250–270 (IFWVGPMIGAAAAAFYHQFIL). The Cytoplasmic segment spans residues 271 to 291 (RAAAIKALGSFGSFGSFRSFA). Phosphoserine is present on residues Ser-283, Ser-286, and Ser-289.

This sequence belongs to the MIP/aquaporin (TC 1.A.8) family. PIP (TC 1.A.8.11) subfamily. In terms of tissue distribution, expressed in roots.

The protein resides in the cell membrane. In terms of biological role, aquaporins facilitate the transport of water and small neutral solutes across cell membranes. The protein is Probable aquaporin PIP2-4 (PIP2-4) of Arabidopsis thaliana (Mouse-ear cress).